A 100-amino-acid polypeptide reads, in one-letter code: Protein Tat (100 aa).

The segment at 1 to 24 (MDPIDPDLEPWKHPGSQPRTVCNN) is interaction with human CREBBP. Positions 1-48 (MDPIDPDLEPWKHPGSQPRTVCNNCYCKACCYHCIYCFTKKGLGISYG) are transactivation. Cys22, Cys25, and Cys27 together coordinate Zn(2+). Residues 22–37 (CNNCYCKACCYHCIYC) are cysteine-rich. N6-acetyllysine; by host PCAF is present on Lys28. Zn(2+)-binding residues include Cys30, His33, Cys34, and Cys37. The core stretch occupies residues 38–48 (FTKKGLGISYG). Basic residues predominate over residues 48 to 58 (GRKKRTTRRRT). Residues 48–100 (GRKKRTTRRRTAPAGSKNNQDSIPKQPLSQSRGNKEGSEKSTKEVASKTEADQ) are disordered. Positions 49–57 (RKKRTTRRR) match the Nuclear localization signal, RNA-binding (TAR), and protein transduction motif. Residues 49-87 (RKKRTTRRRTAPAGSKNNQDSIPKQPLSQSRGNKEGSEK) form an interaction with the host capping enzyme RNGTT region. N6-acetyllysine; by host EP300 and GCN5L2 occurs at positions 50 and 51. Arg52 is subject to Asymmetric dimethylarginine; by host PRMT6. The span at 63–79 (SKNNQDSIPKQPLSQSR) shows a compositional bias: polar residues. Lys72 is covalently cross-linked (Glycyl lysine isopeptide (Lys-Gly) (interchain with G-Cter in ubiquitin)). Basic and acidic residues predominate over residues 80 to 100 (GNKEGSEKSTKEVASKTEADQ).

This sequence belongs to the lentiviruses Tat family. Interacts with host CCNT1. Associates with the P-TEFb complex composed at least of Tat, P-TEFb (CDK9 and CCNT1), TAR RNA, RNA Pol II. Recruits the HATs CREBBP, TAF1/TFIID, EP300, PCAF and GCN5L2. Interacts with host KAT5/Tip60; this interaction targets the latter to degradation. Interacts with the host deacetylase SIRT1. Interacts with host capping enzyme RNGTT; this interaction stimulates RNGTT. Binds to host KDR, and to the host integrins ITGAV/ITGB3 and ITGA5/ITGB1. Interacts with host KPNB1/importin beta-1 without previous binding to KPNA1/importin alpha-1. Interacts with EIF2AK2. Interacts with host nucleosome assembly protein NAP1L1; this interaction may be required for the transport of Tat within the nucleus, since the two proteins interact at the nuclear rim. Interacts with host C1QBP/SF2P32; this interaction involves lysine-acetylated Tat. Interacts with the host chemokine receptors CCR2, CCR3 and CXCR4. Interacts with host DPP4/CD26; this interaction may trigger an anti-proliferative effect. Interacts with host LDLR. Interacts with the host extracellular matrix metalloproteinase MMP1. Interacts with host PRMT6; this interaction mediates Tat's methylation. Interacts with, and is ubiquitinated by MDM2/Hdm2. Interacts with host PSMC3 and HTATIP2. Interacts with STAB1; this interaction may overcome SATB1-mediated repression of IL2 and IL2RA (interleukin) in T cells by binding to the same domain than HDAC1. Interacts (when acetylated) with human CDK13, thereby increasing HIV-1 mRNA splicing and promoting the production of the doubly spliced HIV-1 protein Nef. Interacts with host TBP; this interaction modulates the activity of transcriptional pre-initiation complex. Interacts with host RELA. Asymmetrical arginine methylation by host PRMT6 seems to diminish the transactivation capacity of Tat and affects the interaction with host CCNT1. In terms of processing, acetylation by EP300, CREBBP, GCN5L2/GCN5 and PCAF regulates the transactivation activity of Tat. EP300-mediated acetylation of Lys-50 promotes dissociation of Tat from the TAR RNA through the competitive binding to PCAF's bromodomain. In addition, the non-acetylated Tat's N-terminus can also interact with PCAF. PCAF-mediated acetylation of Lys-28 enhances Tat's binding to CCNT1. Lys-50 is deacetylated by SIRT1. Post-translationally, polyubiquitination by host MDM2 does not target Tat to degradation, but activates its transactivation function and fosters interaction with CCNT1 and TAR RNA. Phosphorylated by EIF2AK2 on serine and threonine residues adjacent to the basic region important for TAR RNA binding and function. Phosphorylation of Tat by EIF2AK2 is dependent on the prior activation of EIF2AK2 by dsRNA.

It localises to the host nucleus. The protein localises to the host nucleolus. Its subcellular location is the host cytoplasm. It is found in the secreted. Transcriptional activator that increases RNA Pol II processivity, thereby increasing the level of full-length viral transcripts. Recognizes a hairpin structure at the 5'-LTR of the nascent viral mRNAs referred to as the transactivation responsive RNA element (TAR) and recruits the cyclin T1-CDK9 complex (P-TEFb complex) that will in turn hyperphosphorylate the RNA polymerase II to allow efficient elongation. The CDK9 component of P-TEFb and other Tat-activated kinases hyperphosphorylate the C-terminus of RNA Pol II that becomes stabilized and much more processive. Other factors such as HTATSF1/Tat-SF1, SUPT5H/SPT5, and HTATIP2 are also important for Tat's function. Besides its effect on RNA Pol II processivity, Tat induces chromatin remodeling of proviral genes by recruiting the histone acetyltransferases (HATs) CREBBP, EP300 and PCAF to the chromatin. This also contributes to the increase in proviral transcription rate, especially when the provirus integrates in transcriptionally silent region of the host genome. To ensure maximal activation of the LTR, Tat mediates nuclear translocation of NF-kappa-B by interacting with host RELA. Through its interaction with host TBP, Tat may also modulate transcription initiation. Tat can reactivate a latently infected cell by penetrating in it and transactivating its LTR promoter. In the cytoplasm, Tat is thought to act as a translational activator of HIV-1 mRNAs. In terms of biological role, extracellular circulating Tat can be endocytosed by surrounding uninfected cells via the binding to several surface receptors such as CD26, CXCR4, heparan sulfate proteoglycans (HSPG) or LDLR. Neurons are rarely infected, but they internalize Tat via their LDLR. Through its interaction with nuclear HATs, Tat is potentially able to control the acetylation-dependent cellular gene expression. Modulates the expression of many cellular genes involved in cell survival, proliferation or in coding for cytokines or cytokine receptors. Tat plays a role in T-cell and neurons apoptosis. Tat induced neurotoxicity and apoptosis probably contribute to neuroAIDS. Circulating Tat also acts as a chemokine-like and/or growth factor-like molecule that binds to specific receptors on the surface of the cells, affecting many cellular pathways. In the vascular system, Tat binds to ITGAV/ITGB3 and ITGA5/ITGB1 integrins dimers at the surface of endothelial cells and competes with bFGF for heparin-binding sites, leading to an excess of soluble bFGF. In Pan (chimpanzees), this protein is Protein Tat.